The chain runs to 238 residues: 3-dehydroquinate dehydratase (238 aa).

Residues 35–37 (ELR) and Arg70 contribute to the 3-dehydroquinate site. His133 (proton donor/acceptor) is an active-site residue. Catalysis depends on Lys160, which acts as the Schiff-base intermediate with substrate. 3-dehydroquinate is bound by residues Arg202 and Gln225.

It belongs to the type-I 3-dehydroquinase family. In terms of assembly, homodimer.

It carries out the reaction 3-dehydroquinate = 3-dehydroshikimate + H2O. It functions in the pathway metabolic intermediate biosynthesis; chorismate biosynthesis; chorismate from D-erythrose 4-phosphate and phosphoenolpyruvate: step 3/7. Involved in the third step of the chorismate pathway, which leads to the biosynthesis of aromatic amino acids. Catalyzes the cis-dehydration of 3-dehydroquinate (DHQ) and introduces the first double bond of the aromatic ring to yield 3-dehydroshikimate. The protein is 3-dehydroquinate dehydratase of Staphylococcus aureus (strain bovine RF122 / ET3-1).